A 306-amino-acid chain; its full sequence is MAAAAAAAAAAGAAGGRGSGPGRRRHLVPGAGGEAGEGAPGGAGDYGNGLESEELEPEELLLEPEPEPEPEEEPPRPRAPPGAPGPGPGSGAPGNQEEEEESGLVEGDPGDGAIEDPELEAIKARVREMEEEAEKLKELQNEVEKQMNMSPPPGNAGPVIMSIEEKMEADARSIYVGNVDYGATAEELEAHFHGCGSVNRVTILCDKFSGHPKGFAYIEFSDKESVRTSLALDESLFRGRQIKVIPKRTNRPGISTTDRGFPRARYRARTTNYNSSRSRFYSGFNSRPRGRVYRGRARATSWYSPY.

Residues 1 to 12 (MAAAAAAAAAAG) are compositionally biased toward low complexity. A disordered region spans residues 1-115 (MAAAAAAAAA…EGDPGDGAIE (115 aa)). A2 is subject to N-acetylalanine. Positions 2 to 145 (AAAAAAAAAA…LKELQNEVEK (144 aa)) are interaction with SKIP. R17 carries the post-translational modification Omega-N-methylarginine. The residue at position 19 (S19) is a Phosphoserine. The span at 30 to 47 (GAGGEAGEGAPGGAGDYG) shows a compositional bias: gly residues. Residues 51 to 72 (ESEELEPEELLLEPEPEPEPEE) are compositionally biased toward acidic residues. S52 carries the post-translational modification Phosphoserine. Over residues 77–87 (PRAPPGAPGPG) the composition is skewed to pro residues. A coiled-coil region spans residues 115–151 (EDPELEAIKARVREMEEEAEKLKELQNEVEKQMNMSP). The tract at residues 119–147 (LEAIKARVREMEEEAEKLKELQNEVEKQM) is stimulates PAPOLA. Phosphoserine occurs at positions 150 and 235. Positions 155-306 (NAGPVIMSIE…ARATSWYSPY (152 aa)) are necessary for homooligomerization. The RRM domain occupies 172-249 (RSIYVGNVDY…RQIKVIPKRT (78 aa)). 3 positions are modified to asymmetric dimethylarginine; alternate: R238, R259, and R263. Omega-N-methylarginine; alternate is present on residues R238, R259, and R263. Asymmetric dimethylarginine occurs at positions 265, 267, 269, 277, 279, 287, 289, 291, 294, 296, and 298. The interaction with PAPOLA stretch occupies residues 286–306 (SRPRGRVYRGRARATSWYSPY).

Monomer and homooligomer. Binds RNA as a monomer and oligomerizes when bound to poly(A). Associates in a ternary complex with CPSF4 and NS/NS1 and interaction with NS/NS1, blocks nuclear export of host cell mRNAs. Associates in a single complex with SKIP and MYOD1 and interacts with SKIP in differentiated myocytes. Interacts with NUDT21/CPSF5. Identified in a IGF2BP1-dependent mRNP granule complex containing untranslated mRNAs. Interacts with PAPOLA, but only in presence of oligo(A) RNA. Interacts with transportin. May interact with SETX. Interacts (via RRM domain and C-terminal arginine-rich region) with ZFP36 (via hypophosphorylated form); this interaction occurs in the nucleus in a RNA-independent manner, decreases in presence of single-stranded poly(A) RNA-oligomer and in a p38-dependent-manner and may down-regulated RNA poly(A) polymerase activity. Component of the poly(A) tail exosome targeting (PAXT) complex composed of PABPN1, ZFC3H1 and MTREX. Interacts with ZFC3H1 in a RNase-insensitive manner. Interacts with FRG1. Interacts with ZC3H11A. Arginine dimethylation is asymmetric and involves PRMT1 and PRMT3. It does not influence the RNA binding properties. Ubiquitous.

The protein resides in the nucleus. The protein localises to the cytoplasm. It is found in the nucleus speckle. Functionally, involved in the 3'-end formation of mRNA precursors (pre-mRNA) by the addition of a poly(A) tail of 200-250 nt to the upstream cleavage product. Stimulates poly(A) polymerase (PAPOLA) conferring processivity on the poly(A) tail elongation reaction and also controls the poly(A) tail length. Increases the affinity of poly(A) polymerase for RNA. Is also present at various stages of mRNA metabolism including nucleocytoplasmic trafficking and nonsense-mediated decay (NMD) of mRNA. Cooperates with SKIP to synergistically activate E-box-mediated transcription through MYOD1 and may regulate the expression of muscle-specific genes. Binds to poly(A) and to poly(G) with high affinity. May protect the poly(A) tail from degradation. Subunit of the trimeric poly(A) tail exosome targeting (PAXT) complex, a complex that directs a subset of long and polyadenylated poly(A) RNAs for exosomal degradation. The RNA exosome is fundamental for the degradation of RNA in eukaryotic nuclei. Substrate targeting is facilitated by its cofactor MTREX, which links to RNA-binding protein adapters. The chain is Polyadenylate-binding protein 2 (PABPN1) from Bos taurus (Bovine).